The following is a 329-amino-acid chain: Biotin synthase (329 aa).

In terms of domain architecture, Radical SAM core spans 36-260 (GEIQLCTLLS…VAVARITMPK (225 aa)). Cys51, Cys55, and Cys58 together coordinate [4Fe-4S] cluster. Residues Cys95, Cys126, Cys186, and Arg264 each coordinate [2Fe-2S] cluster.

Belongs to the radical SAM superfamily. Biotin synthase family. Homodimer. [4Fe-4S] cluster is required as a cofactor. The cofactor is [2Fe-2S] cluster.

The catalysed reaction is (4R,5S)-dethiobiotin + (sulfur carrier)-SH + 2 reduced [2Fe-2S]-[ferredoxin] + 2 S-adenosyl-L-methionine = (sulfur carrier)-H + biotin + 2 5'-deoxyadenosine + 2 L-methionine + 2 oxidized [2Fe-2S]-[ferredoxin]. It functions in the pathway cofactor biosynthesis; biotin biosynthesis; biotin from 7,8-diaminononanoate: step 2/2. Catalyzes the conversion of dethiobiotin (DTB) to biotin by the insertion of a sulfur atom into dethiobiotin via a radical-based mechanism. This is Biotin synthase from Sphingopyxis alaskensis (strain DSM 13593 / LMG 18877 / RB2256) (Sphingomonas alaskensis).